Here is a 367-residue protein sequence, read N- to C-terminus: Nodulation protein NolF (367 aa).

Belongs to the membrane fusion protein (MFP) (TC 8.A.1) family.

Involved in the production of Medicago-specific nodulation signal molecule. This Rhizobium meliloti (strain 1021) (Ensifer meliloti) protein is Nodulation protein NolF (nolF).